The sequence spans 178 residues: Probable host range protein 2 (178 aa).

The protein belongs to the poxviridae C7 protein family.

Functionally, plays a role for multiplication of the virus in different cell types. The sequence is that of Probable host range protein 2 from Yaba-like disease virus (YLDV).